Consider the following 184-residue polypeptide: CDP-archaeol synthase (184 aa).

5 helical membrane passes run 4–24, 54–74, 86–106, 122–142, and 145–165; these read IIMVLYSIFLFLPAFIANPGA, FIGGSLIGVLAGIIVYYIIYI, IISALPVLFAMSFGSLTGDIT, GSLLDQWPFVLMSFLFIFIFA, and FFLEFYGNFIAIILILVLTPP.

This sequence belongs to the CDP-archaeol synthase family. Mg(2+) serves as cofactor.

It localises to the cell membrane. It catalyses the reaction 2,3-bis-O-(geranylgeranyl)-sn-glycerol 1-phosphate + CTP + H(+) = CDP-2,3-bis-O-(geranylgeranyl)-sn-glycerol + diphosphate. Its pathway is membrane lipid metabolism; glycerophospholipid metabolism. In terms of biological role, catalyzes the formation of CDP-2,3-bis-(O-geranylgeranyl)-sn-glycerol (CDP-archaeol) from 2,3-bis-(O-geranylgeranyl)-sn-glycerol 1-phosphate (DGGGP) and CTP. This reaction is the third ether-bond-formation step in the biosynthesis of archaeal membrane lipids. This Picrophilus torridus (strain ATCC 700027 / DSM 9790 / JCM 10055 / NBRC 100828 / KAW 2/3) protein is CDP-archaeol synthase.